The chain runs to 417 residues: Putative competence-damage inducible protein (417 aa).

The protein belongs to the CinA family.

This is Putative competence-damage inducible protein from Leuconostoc citreum (strain KM20).